Here is a 352-residue protein sequence, read N- to C-terminus: MSQQTPLAYAVAQWLQQSSTSVPADQKAKLQQAAKSVSEAFGVDTSSAEQQAQYGSGPGLQAIFDIFLKTQAKMGAAPAPAAASSSSTAPAAAAATPSDEDLAKAEQLKAEGNKAMSAKDYGAAIEAYGKAIELNPNSPVYFSNRAAAFSQIGQHDSAIDDAKQASKIDPKFGKAYSRLGHALFSSGRYQEAVEAYQKGVEVDPSNEVLKKGLAASKEQLSSSSSSNANDATASRGAADAVSAPSAGADAGAGAGGFPNFGGGAGGMPDLAAMMNNPMIAQMAQNLMSNPDSLASLMNNPMLRQAAERFGSGGGMPDMSSMMNDPALRDMARNFMGGAGRGAGGNGGNNMYG.

A compositionally biased stretch (low complexity) spans 80-97 (PAAASSSSTAPAAAAATP). The tract at residues 80-103 (PAAASSSSTAPAAAAATPSDEDLA) is disordered. TPR repeat units lie at residues 105–138 (AEQL…NPNS), 140–172 (VYFS…DPKF), and 173–206 (GKAY…DPSN). The interval 217–236 (KEQLSSSSSSNANDATASRG) is disordered.

It belongs to the SGT family.

Co-chaperone that binds to the molecular chaperone Hsp70 and regulates Hsp70 ATPase activity. The chain is Small glutamine-rich tetratricopeptide repeat-containing protein 2 from Mycosarcoma maydis (Corn smut fungus).